We begin with the raw amino-acid sequence, 426 residues long: Histidine--tRNA ligase (426 aa).

It belongs to the class-II aminoacyl-tRNA synthetase family. Homodimer.

The protein localises to the cytoplasm. It catalyses the reaction tRNA(His) + L-histidine + ATP = L-histidyl-tRNA(His) + AMP + diphosphate + H(+). This is Histidine--tRNA ligase from Prochlorococcus marinus (strain AS9601).